The sequence spans 1302 residues: Ubiquitin conjugation factor E4 B (1302 aa).

Met1 carries the post-translational modification N-acetylmethionine. Residues Met1–Glu155 form a disordered region. A compositionally biased stretch (low complexity) spans Arg16–Gln33. Phosphoserine occurs at positions 23 and 31. Polar residues predominate over residues Gln51–Thr64. Residues Ser76–Ser99 show a composition bias toward low complexity. Ser84, Ser88, Ser90, Ser101, Ser103, Ser105, and Ser124 each carry phosphoserine. A compositionally biased stretch (basic and acidic residues) spans Asn134–Pro147. At Ser238 the chain carries Phosphoserine. Polar residues predominate over residues Ala299 to Ser327. Positions Ala299 to Ala406 are disordered. The span at Ala340–Ser374 shows a compositional bias: low complexity. The residue at position 383 (Ser383) is a Phosphoserine. Residues Pro384–Leu400 are compositionally biased toward low complexity. Residues Ser803 and Ser969 each carry the phosphoserine modification. Positions Asn1057 to Ala1077 are disordered. Residues Arg1066–Ala1077 are compositionally biased toward low complexity. Positions Asp1227–Ser1300 constitute a U-box domain. The residue at position 1265 (Ser1265) is a Phosphoserine.

It belongs to the ubiquitin conjugation factor E4 family. In terms of assembly, interacts with VCP/p97. Interacts with STUB1/CHIP and UNC45B. Proteolytically cleaved by caspases during apoptosis. Cleaved efficiently at Asp-123 by caspase-6 and granzyme B. Cleaved with approximately 10-fold less efficiency at Asp-109 by caspase-3 and caspase-7. As to expression, expressed in differentiated myotubes (at protein level). Highest expression in ovary, testis, heart and skeletal muscle. Expression is low in colon, thymus and peripheral blood leukocytes. Almost undetectable in lung and spleen.

It localises to the cytoplasm. The protein localises to the nucleus. The catalysed reaction is S-ubiquitinyl-[E2 ubiquitin-conjugating enzyme]-L-cysteine + [acceptor protein]-L-lysine = [E2 ubiquitin-conjugating enzyme]-L-cysteine + N(6)-ubiquitinyl-[acceptor protein]-L-lysine.. It functions in the pathway protein modification; protein ubiquitination. Functionally, ubiquitin-protein ligase that probably functions as an E3 ligase in conjunction with specific E1 and E2 ligases. May also function as an E4 ligase mediating the assembly of polyubiquitin chains on substrates ubiquitinated by another E3 ubiquitin ligase. May regulate myosin assembly in striated muscles together with STUB1 and VCP/p97 by targeting myosin chaperone UNC45B for proteasomal degradation. The sequence is that of Ubiquitin conjugation factor E4 B from Homo sapiens (Human).